Consider the following 330-residue polypeptide: Phenylalanine--tRNA ligase alpha subunit (330 aa).

Residue E257 participates in Mg(2+) binding.

Belongs to the class-II aminoacyl-tRNA synthetase family. Phe-tRNA synthetase alpha subunit type 1 subfamily. In terms of assembly, tetramer of two alpha and two beta subunits. Mg(2+) serves as cofactor.

The protein resides in the cytoplasm. The enzyme catalyses tRNA(Phe) + L-phenylalanine + ATP = L-phenylalanyl-tRNA(Phe) + AMP + diphosphate + H(+). The protein is Phenylalanine--tRNA ligase alpha subunit of Nostoc punctiforme (strain ATCC 29133 / PCC 73102).